A 51-amino-acid polypeptide reads, in one-letter code: Large ribosomal subunit protein eL40 (51 aa).

Residues Cys17, Cys20, Cys31, and Cys34 each coordinate Zn(2+).

This sequence belongs to the eukaryotic ribosomal protein eL40 family. In terms of assembly, part of the 50S ribosomal subunit. Requires Zn(2+) as cofactor.

This chain is Large ribosomal subunit protein eL40, found in Thermococcus kodakarensis (strain ATCC BAA-918 / JCM 12380 / KOD1) (Pyrococcus kodakaraensis (strain KOD1)).